Reading from the N-terminus, the 643-residue chain is Conglutin alpha 2 (643 aa).

The first 22 residues, Met-1–Ala-22, serve as a signal peptide directing secretion. Disulfide bonds link Cys-31–Cys-64 and Cys-107–Cys-464. The 226-residue stretch at Leu-36 to Asn-261 folds into the Cupin type-1 1 domain. Disordered stretches follow at residues Thr-110–Gln-142, Pro-190–Gly-243, and Pro-285–Gly-458. A compositionally biased stretch (low complexity) spans Gln-207–Gln-218. 2 stretches are compositionally biased toward basic and acidic residues: residues His-228–Lys-237 and Pro-298–Glu-313. The segment covering Glu-314–Glu-323 has biased composition (acidic residues). Composition is skewed to basic and acidic residues over residues Pro-324–Gln-333 and Gln-357–Thr-369. Residues Arg-422–Gly-433 are compositionally biased toward basic residues. In terms of domain architecture, Cupin type-1 2 spans Glu-470–Ser-616. A compositionally biased stretch (polar residues) spans Asn-623–Ser-632. The segment at Asn-623–Ala-643 is disordered. Residues Ser-634–Ala-643 show a composition bias toward basic and acidic residues.

It belongs to the 11S seed storage protein (globulins) family. In terms of assembly, hexamer; each subunit is composed of an acidic and a basic chain derived from a single precursor and linked by a disulfide bond. Component of globulins complexes which accumulate in seeds.

Sulfur-rich seed storage protein. This protein found in the seeds of many leguminous and non-leguminous plants is the source of sulfur-containing amino acids in seed meals. The sequence is that of Conglutin alpha 2 from Lupinus angustifolius (Narrow-leaved blue lupine).